The following is a 333-amino-acid chain: Transmembrane protein I329L (333 aa).

Residues 1 to 31 (MLRVFIFFVFLGSGLTGRIKPQITCKYFISE) form the signal peptide. N-linked (GlcNAc...) asparagine; by host glycosylation is found at Asn-32, Asn-39, Asn-44, Asn-76, Asn-82, and Asn-101. The Extracellular portion of the chain corresponds to 32–239 (NNTWYKYNVT…NTERYKSCYP (208 aa)). The stretch at 112–133 (ELKFLDLRYNDLQVIEYNILRK) is one LRR repeat. 3 N-linked (GlcNAc...) asparagine; by host glycosylation sites follow: Asn-181, Asn-185, and Asn-219. Cys-195 and Cys-237 are joined by a disulfide. A helical transmembrane segment spans residues 240–260 (LVFISILCSCISFLFLFICLL). Topologically, residues 261–333 (RSICKKYSCT…EKKVSCSRRK (73 aa)) are cytoplasmic.

It belongs to the asfivirus I329L family. Highly glycosylated.

It localises to the host endoplasmic reticulum membrane. It is found in the host Golgi apparatus membrane. Functionally, viral TLR3 homolog that probably prevents TLR3 dimerization and subsequent induction of IFN. Inhibits dsRNA-stimulated activation of NF-kB and IRF3. The protein is Transmembrane protein I329L of Ornithodoros (relapsing fever ticks).